We begin with the raw amino-acid sequence, 111 residues long: Photosystem II reaction center Psb28 protein (111 aa).

This sequence belongs to the Psb28 family. As to quaternary structure, part of the photosystem II complex.

Its subcellular location is the cellular thylakoid membrane. The polypeptide is Photosystem II reaction center Psb28 protein (Trichormus variabilis (strain ATCC 29413 / PCC 7937) (Anabaena variabilis)).